A 201-amino-acid polypeptide reads, in one-letter code: 3-isopropylmalate dehydratase small subunit (201 aa).

Belongs to the LeuD family. LeuD type 1 subfamily. As to quaternary structure, heterodimer of LeuC and LeuD.

It catalyses the reaction (2R,3S)-3-isopropylmalate = (2S)-2-isopropylmalate. It participates in amino-acid biosynthesis; L-leucine biosynthesis; L-leucine from 3-methyl-2-oxobutanoate: step 2/4. Its function is as follows. Catalyzes the isomerization between 2-isopropylmalate and 3-isopropylmalate, via the formation of 2-isopropylmaleate. This is 3-isopropylmalate dehydratase small subunit from Klebsiella pneumoniae (strain 342).